A 268-amino-acid polypeptide reads, in one-letter code: Putative esterase/lipase 2 (268 aa).

The active site involves His-29. Residue Ser-98 is the Charge relay system of the active site.

Belongs to the lipase/esterase LIP3/BchO family.

The polypeptide is Putative esterase/lipase 2 (Mycoplasma genitalium (strain ATCC 33530 / DSM 19775 / NCTC 10195 / G37) (Mycoplasmoides genitalium)).